The following is a 276-amino-acid chain: NADPH-dependent 7-cyano-7-deazaguanine reductase (276 aa).

83–85 provides a ligand contact to substrate; that stretch reads IES. Residue 85-86 coordinates NADPH; it reads SK. The active-site Thioimide intermediate is the cysteine 184. Catalysis depends on aspartate 191, which acts as the Proton donor. 223-224 serves as a coordination point for substrate; it reads HE. Residue 252 to 253 participates in NADPH binding; the sequence is RG.

This sequence belongs to the GTP cyclohydrolase I family. QueF type 2 subfamily. As to quaternary structure, homodimer.

Its subcellular location is the cytoplasm. The catalysed reaction is 7-aminomethyl-7-carbaguanine + 2 NADP(+) = 7-cyano-7-deazaguanine + 2 NADPH + 3 H(+). It participates in tRNA modification; tRNA-queuosine biosynthesis. Functionally, catalyzes the NADPH-dependent reduction of 7-cyano-7-deazaguanine (preQ0) to 7-aminomethyl-7-deazaguanine (preQ1). The chain is NADPH-dependent 7-cyano-7-deazaguanine reductase from Pseudomonas fluorescens (strain ATCC BAA-477 / NRRL B-23932 / Pf-5).